A 317-amino-acid polypeptide reads, in one-letter code: Putative S-adenosyl-L-methionine-dependent methyltransferase MSMEG_0093 (317 aa).

Residues aspartate 134 and 163–164 (DL) each bind S-adenosyl-L-methionine.

It belongs to the UPF0677 family.

Its function is as follows. Exhibits S-adenosyl-L-methionine-dependent methyltransferase activity. This chain is Putative S-adenosyl-L-methionine-dependent methyltransferase MSMEG_0093, found in Mycolicibacterium smegmatis (strain ATCC 700084 / mc(2)155) (Mycobacterium smegmatis).